A 436-amino-acid polypeptide reads, in one-letter code: Acetyl-CoA decarbonylase/synthase complex subunit delta 2 (436 aa).

The protein belongs to the CdhD family. Heterodimer of delta and gamma chains. The ACDS complex is made up of alpha, epsilon, beta, gamma and delta chains with a probable stoichiometry of (alpha(2)epsilon(2))(4)-beta(8)-(gamma(1)delta(1))(8) (Potential).

Its pathway is one-carbon metabolism; methanogenesis from acetate. Functionally, part of a complex that catalyzes the reversible cleavage of acetyl-CoA, allowing growth on acetate as sole source of carbon and energy. Probably maintains the overall quaternary structure of the ACDS complex. The polypeptide is Acetyl-CoA decarbonylase/synthase complex subunit delta 2 (cdhD2) (Methanosarcina acetivorans (strain ATCC 35395 / DSM 2834 / JCM 12185 / C2A)).